A 710-amino-acid polypeptide reads, in one-letter code: Methionine--tRNA ligase (710 aa).

The 'HIGH' region motif lies at 16–26 (PYANGAFHIGH). Positions 147, 150, 160, and 163 each coordinate Zn(2+). The 'KMSKS' region signature appears at 350–354 (KMSKS). Lys-353 contributes to the ATP binding site. The tRNA-binding domain occupies 604–710 (DFAKIDLRIA…PGAEPGMRVG (107 aa)).

This sequence belongs to the class-I aminoacyl-tRNA synthetase family. MetG type 1 subfamily. Homodimer. Requires Zn(2+) as cofactor.

The protein localises to the cytoplasm. It catalyses the reaction tRNA(Met) + L-methionine + ATP = L-methionyl-tRNA(Met) + AMP + diphosphate. Is required not only for elongation of protein synthesis but also for the initiation of all mRNA translation through initiator tRNA(fMet) aminoacylation. This Herminiimonas arsenicoxydans protein is Methionine--tRNA ligase.